Reading from the N-terminus, the 431-residue chain is Evolutionarily conserved signaling intermediate in Toll pathway, mitochondrial (431 aa).

The transit peptide at 1 to 48 (MSWVQATLLARGLCRAWGGTCGAALTGTSISQVPRRLPRGLHCSAAAH) directs the protein to the mitochondrion. Lys372 participates in a covalent cross-link: Glycyl lysine isopeptide (Lys-Gly) (interchain with G-Cter in ubiquitin). A disordered region spans residues 400–431 (LQTSSAGLEEPPLPEDHQEEDDNLQRQQQGQS).

Belongs to the ECSIT family. In terms of assembly, interacts with MAP3K1, SMAD4 and TRAF6. Interacts with SMAD1 only after BMP4-treatment. Part of the mitochondrial complex I assembly/MCIA complex that comprises at least the core subunits TMEM126B, NDUFAF1, ECSIT and ACAD9 and complement subunits such as COA1 and TMEM186. Interacts with NDUFAF1. Interacts with ACAD9. Interacts with TRIM59. Interacts with TMEM70 and TMEM242. Interacts (when ubiquitinated) with NF-kappa-B subunits RELA and NFKB1. Interacts with RIGI, IFIT1 and MAVS; these interactions promote RLR-mediated type I IFN induction. Interacts with SQSTM1; this interaction inhibits TLR4 signaling via functional regulation of the TRAF6-ECSIT complex. Interacts with cereblon/CRBN; this interaction inhibits the ubiquitination of ECSIT. In terms of processing, ubiquitinated on Lys-372; leading to translocation in the nucleus together with RELA and NFKB1 and expression of NF-kappa-B-dependent genes.

The protein localises to the cytoplasm. It localises to the nucleus. Its subcellular location is the mitochondrion. Functionally, adapter protein that plays a role in different signaling pathways including TLRs and IL-1 pathways or innate antiviral induction signaling. Plays a role in the activation of NF-kappa-B by forming a signal complex with TRAF6 and TAK1/MAP3K7 to activate TAK1/MAP3K7 leading to activation of IKKs. Once ubiquitinated, interacts with the dissociated RELA and NFKB1 proteins and translocates to the nucleus where it induces NF-kappa-B-dependent gene expression. Plays a role in innate antiviral immune response by bridging the pattern recognition receptors RIGI and MDA5/IFIT1 to the MAVS complex at the mitochondrion. Promotes proteolytic activation of MAP3K1. Involved in the BMP signaling pathway. Required for normal embryonic development. Its function is as follows. As part of the MCIA complex, involved in the assembly of the mitochondrial complex I. This is Evolutionarily conserved signaling intermediate in Toll pathway, mitochondrial from Homo sapiens (Human).